We begin with the raw amino-acid sequence, 261 residues long: Ribonuclease HII (261 aa).

Residues 1 to 20 are compositionally biased toward basic and acidic residues; that stretch reads MIRDKSAKRPAKDAPKKAAV. Positions 1–23 are disordered; the sequence is MIRDKSAKRPAKDAPKKAAVKEA. In terms of domain architecture, RNase H type-2 spans 42–230; it reads WPVAGCDEAG…VAAARAKHMP (189 aa). Positions 48, 49, and 139 each coordinate a divalent metal cation.

The protein belongs to the RNase HII family. Mn(2+) serves as cofactor. Requires Mg(2+) as cofactor.

It localises to the cytoplasm. The catalysed reaction is Endonucleolytic cleavage to 5'-phosphomonoester.. In terms of biological role, endonuclease that specifically degrades the RNA of RNA-DNA hybrids. This is Ribonuclease HII from Bradyrhizobium diazoefficiens (strain JCM 10833 / BCRC 13528 / IAM 13628 / NBRC 14792 / USDA 110).